Consider the following 339-residue polypeptide: Probable cytosolic iron-sulfur protein assembly protein CIAO1 (339 aa).

WD repeat units lie at residues 14–53 (HPDSRCWFLAWNPTGTLLASCGGDRKIRIWGTEGDSWICK), 59–98 (GHQRTVRKVAWSPCGNYLASASFDATTCIWKKNQDDFECV), 103–142 (GHENEVKSVAWAPSGNLLATCSRDKSVWVWEVDEEDEYEC), 148–187 (SHTQDVKHVVWHPSQELLASASYDDTVKLYQEEGDDWVCC), 192–231 (GHESTVWSIAFDPSGQRLASCSDDRTVRIWRQYLPGNEQG), 250–289 (FHTRTIYDVAWCQLTGALATACGDDAIRVFEEDPGSDPQQ), and 301–339 (AHSQDVNCVAWNPKEAGLLASCSDDGEVAFWEYHQPAGL). Residues 176–178 (LYQ) carry the LYR motif; required for interaction with HSC20 motif.

Belongs to the WD repeat CIA1 family. As to quaternary structure, component of the CIA complex. Interacts with CIAO2A and forms a complex with CIAO2B and MMS19; the interactions with CIAO2A and CIAO2B are mutually exclusive. Interacts with CHD1L, ERCC2, IREB2 and POLD1. Component of the MMXD complex, which includes CIAO1, ERCC2, CIAO2B, MMS19 and SLC25A5. Interacts with WT1. Interacts with CIAO3. Interacts (via LYR motif) with HSC20.

It is found in the cytoplasm. Functionally, key component of the cytosolic iron-sulfur protein assembly (CIA) complex, a multiprotein complex that mediates the incorporation of iron-sulfur cluster into extramitochondrial Fe/S proteins. As a CIA complex component, interacts specifically with CIAO2A or CIAO2B and MMS19 to assist different branches of iron-sulfur protein assembly, depending of its interactors. The complex CIAO1:CIAO2B:MMS19 binds to and facilitates the assembly of most cytosolic-nuclear Fe/S proteins. CIAO1:CIAO2A specifically matures ACO1 and stabilizes IREB2. Seems to specifically modulate the transactivation activity of WT1. As part of the mitotic spindle-associated MMXD complex it may play a role in chromosome segregation. This is Probable cytosolic iron-sulfur protein assembly protein CIAO1 from Rattus norvegicus (Rat).